The chain runs to 574 residues: ATP-dependent RNA helicase RhlB (574 aa).

The Q motif signature appears at 9-37 (VTFSSFDLHPALVAGLESAGFTRCTPIQA). Residues 40–220 (LPVALPGGDV…YEHMNEPEKL (181 aa)) form the Helicase ATP-binding domain. Position 53-60 (53-60 (AQTGTGKT)) interacts with ATP. A DEAD box motif is present at residues 166–169 (DEAD). The region spanning 231 to 393 (RVRQRIYFPS…PVTSELLTPL (163 aa)) is the Helicase C-terminal domain. Residues 423-432 (EQRAAEEQRR) show a composition bias toward basic and acidic residues. A disordered region spans residues 423–574 (EQRAAEEQRR…RRLRSLVSGN (152 aa)). Residues 435 to 449 (GRSGPGGGSRSGSGG) show a composition bias toward gly residues. The span at 477 to 495 (AAAAQTEKPVVAAAAAQAP) shows a compositional bias: low complexity. Basic residues predominate over residues 506-515 (PRKRRRRRNG). 2 stretches are compositionally biased toward low complexity: residues 523 to 535 (PAVASTPIAAPAA) and 553 to 562 (SSGSPSLLGR).

This sequence belongs to the DEAD box helicase family. RhlB subfamily. In terms of assembly, component of the RNA degradosome, which is a multiprotein complex involved in RNA processing and mRNA degradation.

It is found in the cytoplasm. The catalysed reaction is ATP + H2O = ADP + phosphate + H(+). Functionally, DEAD-box RNA helicase involved in RNA degradation. Has RNA-dependent ATPase activity and unwinds double-stranded RNA. This chain is ATP-dependent RNA helicase RhlB, found in Xanthomonas oryzae pv. oryzae (strain KACC10331 / KXO85).